The primary structure comprises 143 residues: Hemoglobin subunit alpha-2 (143 aa).

Ser2 carries the post-translational modification N-acetylserine. The 142-residue stretch at 2 to 143 (SLSSKQKATV…LALALAEKYR (142 aa)) folds into the Globin domain. His60 contacts O2. His89 is a binding site for heme b.

This sequence belongs to the globin family. In terms of assembly, hb 2 is a heterotetramer of two alpha-2 and two beta-2 chains. Red blood cells.

Involved in oxygen transport from gills to the various peripheral tissues. In Gadus morhua (Atlantic cod), this protein is Hemoglobin subunit alpha-2 (hba2).